Here is a 293-residue protein sequence, read N- to C-terminus: MADGVVIVDKPAGWTSHDVVARVRRLAGTRRVGHAGTLDPMATGVLVVGVGKATRLLGYLALTEKVYEATIRLGQSTTTDDAEGELLERRPADHIDEAAVHAGTRALTGVIHQVPPQVSAVKVRGQRAYRRARAGETVELKAREVTVHEFTVTGFRRVDSPDGAFVDVDARVTCSSGTYIRSLARDLGADLGVGGHLTALRRTRVGPYTVEQAATLDELAAEFTVMPLAEAVAAAFPVRRLSAGEARRVVHGHRISPSGHSGPVGLFAPDGRVLALAENRSGSSQPVVVFAGS.

The active-site Nucleophile is Asp-39.

It belongs to the pseudouridine synthase TruB family. Type 1 subfamily.

It carries out the reaction uridine(55) in tRNA = pseudouridine(55) in tRNA. Its function is as follows. Responsible for synthesis of pseudouridine from uracil-55 in the psi GC loop of transfer RNAs. The protein is tRNA pseudouridine synthase B of Thermobifida fusca (strain YX).